Reading from the N-terminus, the 61-residue chain is Metallothionein-1D (61 aa).

Residues 1 to 29 (MDPNCSCSTGGSCSCATSCTCKACRCTSC) are beta. A divalent metal cation contacts are provided by Cys-5, Cys-7, Cys-13, Cys-15, Cys-19, Cys-21, Cys-24, Cys-26, Cys-29, Cys-33, Cys-34, Cys-36, Cys-37, Cys-41, Cys-44, Cys-48, Cys-50, Cys-57, Cys-59, and Cys-60. An alpha region spans residues 30-61 (KKSCCSCCPAGCAKCAQGCICKGASDKCSCCA).

Belongs to the metallothionein superfamily. Type 1 family. In terms of assembly, monomer.

In terms of biological role, metallothioneins have a high content of cysteine residues that bind various heavy metals; these proteins are transcriptionally regulated by both heavy metals and glucocorticoids. The chain is Metallothionein-1D (MT1D) from Sus scrofa (Pig).